The chain runs to 314 residues: tRNA dimethylallyltransferase (314 aa).

13–20 lines the ATP pocket; that stretch reads GPTASGKS. 15-20 is a binding site for substrate; that stretch reads TASGKS. Interaction with substrate tRNA regions lie at residues 38–41 and 161–165; these read DSMQ and QRIAR.

The protein belongs to the IPP transferase family. In terms of assembly, monomer. The cofactor is Mg(2+).

It catalyses the reaction adenosine(37) in tRNA + dimethylallyl diphosphate = N(6)-dimethylallyladenosine(37) in tRNA + diphosphate. Its function is as follows. Catalyzes the transfer of a dimethylallyl group onto the adenine at position 37 in tRNAs that read codons beginning with uridine, leading to the formation of N6-(dimethylallyl)adenosine (i(6)A). The polypeptide is tRNA dimethylallyltransferase (Parvibaculum lavamentivorans (strain DS-1 / DSM 13023 / NCIMB 13966)).